The following is a 496-amino-acid chain: Autophagy-related protein 21 (496 aa).

The disordered stretch occupies residues 41–86 (SKKKTSNNNGSASNSESRNNEESILITNGSRDRTDAEEEEDNEDNA). Residues 46–57 (SNNNGSASNSES) show a composition bias toward low complexity. Acidic residues predominate over residues 75-84 (DAEEEEDNED). T213 is modified (phosphothreonine). Residue S237 is modified to Phosphoserine. WD repeat units follow at residues 294-334 (VHKG…DYMS), 346-385 (TRLC…NSLP), and 448-488 (VNES…GECV). The short motif at 342 to 346 (FRRGT) is the L/FRRG motif element.

This sequence belongs to the WD repeat PROPPIN family.

It is found in the cytoplasm. The protein resides in the vacuole. Functionally, required for cytoplasm to vacuole transport (Cvt) vesicles formation and mitophagy. Involved in binding of phosphatidylethanolamine to ATG8 and in recruitment of ATG8 and ATG5 to the pre-autophagosomal structure. Protects ATG8 from ARG4-mediated cleavage. Essential for maturation of proaminopeptidase I. The protein is Autophagy-related protein 21 (ATG21) of Saccharomyces cerevisiae (strain ATCC 204508 / S288c) (Baker's yeast).